Here is a 507-residue protein sequence, read N- to C-terminus: Natural resistance-associated macrophage protein 1 (507 aa).

The segment at 1–36 (MIRDKNPQRVNRPSYGSISSLPSPAPQPEPSRNTYL) is disordered. Residues 1-39 (MIRDKNPQRVNRPSYGSISSLPSPAPQPEPSRNTYLSEK) are Cytoplasmic-facing. Positions 8–22 (QRVNRPSYGSISSLP) are enriched in polar residues. A helical membrane pass occupies residues 40 to 60 (IPIPSTEQLLWVLLWATVLGL). Residues 61 to 123 (LCQRLAARLG…ISFNLLSAGR (63 aa)) lie on the Extracellular side of the membrane. The chain crosses the membrane as a helical span at residues 124–144 (IPLWGGVLITIVDTFFFLFLD). At 145-152 (NYGLRKLE) the chain is on the cytoplasmic side. The chain crosses the membrane as a helical span at residues 153–173 (AFFGFLVTIMALTFGYEYVVA). The Extracellular portion of the chain corresponds to 174-199 (RPSQGALLKGLFLPSCPGCGQPELLQ). Residues 200 to 220 (AVGIVGAIIMPHNIYLHSALV) traverse the membrane as a helical segment. Residues 221 to 245 (KSREVDRTRRGDVREANMYFLTEAT) are Cytoplasmic-facing. The helical transmembrane segment at 246 to 266 (IALFVSFIINLFVMAVFGQAF) threads the bilayer. The Extracellular portion of the chain corresponds to 267 to 305 (YQQTNEEAFNICANSSLHNYAKIFPRDNNTVSVDIYQGG). 2 N-linked (GlcNAc...) asparagine glycosylation sites follow: Asn280 and Asn294. The helical transmembrane segment at 306 to 326 (VILGCLFGPAALYIWAVGLLA) threads the bilayer. Topologically, residues 327-353 (AGQSSTMTGTYAGQFVMEGFLKLRWSR) are cytoplasmic. A helical membrane pass occupies residues 354-374 (FARVLLTRSCAILPTVLVAVF). The Extracellular portion of the chain corresponds to 375–391 (RDLRDLSGLNDLLNVLQ). Residues 392–412 (SLLLPFAVLPILTFTSMPAVM) form a helical membrane-spanning segment. Residues 413–422 (QEFANGWLSK) lie on the Cytoplasmic side of the membrane. Residues 423–443 (VITSCIMALVCAINLYFVISY) traverse the membrane as a helical segment. The Extracellular portion of the chain corresponds to 444–451 (LPSLPHPA). Residues 452–472 (YFGLVALLAIGYLGLTAYLAW) traverse the membrane as a helical segment. Over 473–507 (TCCIAHGAKFLTHSSHQRFLYGLPIEEQEGREGSG) the chain is Cytoplasmic.

Belongs to the NRAMP family.

It localises to the late endosome membrane. Its subcellular location is the lysosome membrane. The catalysed reaction is Zn(2+)(in) + H(+)(out) = Zn(2+)(out) + H(+)(in). It carries out the reaction Fe(2+)(in) + H(+)(out) = Fe(2+)(out) + H(+)(in). The enzyme catalyses Mn(2+)(in) + H(+)(out) = Mn(2+)(out) + H(+)(in). Functionally, macrophage-specific antiporter that fluxes metal ions in either direction against a proton gradient. Localized to late endosomal lysosomal membranes, delivers bivalent cations from the cytosol into these acidic compartments where they may directly affect antimicrobial activity. Involved in iron metabolism and host natural resistance to infection with intracellular parasites. Pathogen resistance involves sequestration of Fe(2+) and Mn(2+), cofactors of both prokaryotic and eukaryotic catalases and superoxide dismutases, not only to protect the macrophage against its own generation of reactive oxygen species, but to deny the cations to the pathogen for synthesis of its protective enzymes. This Rattus norvegicus (Rat) protein is Natural resistance-associated macrophage protein 1 (Slc11a1).